Reading from the N-terminus, the 645-residue chain is DNA ligase (645 aa).

Residues 30-34 (DIEYD), 79-80 (SM), and Glu106 each bind NAD(+). Catalysis depends on Lys108, which acts as the N6-AMP-lysine intermediate. NAD(+) is bound by residues Arg129, Glu163, and Lys302. Zn(2+)-binding residues include Cys396, Cys399, Cys412, and Cys417. A BRCT domain is found at 570–645 (ISQNVFTKKT…ISEDEFKEML (76 aa)).

The protein belongs to the NAD-dependent DNA ligase family. LigA subfamily. Requires Mg(2+) as cofactor. The cofactor is Mn(2+).

It carries out the reaction NAD(+) + (deoxyribonucleotide)n-3'-hydroxyl + 5'-phospho-(deoxyribonucleotide)m = (deoxyribonucleotide)n+m + AMP + beta-nicotinamide D-nucleotide.. In terms of biological role, DNA ligase that catalyzes the formation of phosphodiester linkages between 5'-phosphoryl and 3'-hydroxyl groups in double-stranded DNA using NAD as a coenzyme and as the energy source for the reaction. It is essential for DNA replication and repair of damaged DNA. The chain is DNA ligase from Campylobacter hominis (strain ATCC BAA-381 / DSM 21671 / CCUG 45161 / LMG 19568 / NCTC 13146 / CH001A).